Reading from the N-terminus, the 327-residue chain is Phenylalanine--tRNA ligase alpha subunit (327 aa).

Residue Glu252 coordinates Mg(2+).

This sequence belongs to the class-II aminoacyl-tRNA synthetase family. Phe-tRNA synthetase alpha subunit type 1 subfamily. As to quaternary structure, tetramer of two alpha and two beta subunits. Mg(2+) serves as cofactor.

The protein localises to the cytoplasm. It catalyses the reaction tRNA(Phe) + L-phenylalanine + ATP = L-phenylalanyl-tRNA(Phe) + AMP + diphosphate + H(+). This chain is Phenylalanine--tRNA ligase alpha subunit, found in Aeromonas salmonicida (strain A449).